The following is a 122-amino-acid chain: Large ribosomal subunit protein bL12 (122 aa).

This sequence belongs to the bacterial ribosomal protein bL12 family. As to quaternary structure, homodimer. Part of the ribosomal stalk of the 50S ribosomal subunit. Forms a multimeric L10(L12)X complex, where L10 forms an elongated spine to which 2 to 4 L12 dimers bind in a sequential fashion. Binds GTP-bound translation factors.

Functionally, forms part of the ribosomal stalk which helps the ribosome interact with GTP-bound translation factors. Is thus essential for accurate translation. The protein is Large ribosomal subunit protein bL12 of Staphylococcus aureus (strain Newman).